A 243-amino-acid polypeptide reads, in one-letter code: MADAEDSRHSKNEGFPNTSLITEKLDLLDLFGSPKVKTEREGRPARLLEGLSAVNAETAFVKTHPLQHEWTLWFLKPPTQGLEWSDLLKEIISFKTVEEFWGIFKTISKASMLPAKSDYSYFLKGIRPEWEDPQNMNGGKWAYQSKHKGSNLDELWLYMVLAAIGETLDPTGKEVTGVVCNMRKGFYRIAVWTRNCNDKDVLEKIGLRFKEVLGISDKETIEYSAHEDSSKAGSMRAKTRMSL.

The protein belongs to the eukaryotic initiation factor 4E family. In terms of assembly, eIF4F is a multi-subunit complex, the composition of which varies with external and internal environmental conditions. It is composed of at least eIF4A, eIF4E and eIF4G. eIF4E is also known to interact with other partners.

Recognizes and binds the 7-methylguanosine-containing mRNA cap during an early step in the initiation of protein synthesis and facilitates ribosome binding by inducing the unwinding of the mRNAs secondary structures. The polypeptide is Eukaryotic translation initiation factor 4E-2 (tif452) (Schizosaccharomyces pombe (strain 972 / ATCC 24843) (Fission yeast)).